The sequence spans 133 residues: Large ribosomal subunit protein uL14 (133 aa).

Belongs to the universal ribosomal protein uL14 family. As to quaternary structure, part of the 50S ribosomal subunit. Forms a cluster with proteins L3 and L24e, part of which may contact the 16S rRNA in 2 intersubunit bridges.

Binds to 23S rRNA. Forms part of two intersubunit bridges in the 70S ribosome. The chain is Large ribosomal subunit protein uL14 from Methanopyrus kandleri (strain AV19 / DSM 6324 / JCM 9639 / NBRC 100938).